The sequence spans 303 residues: Leukocyte immunoglobulin-like receptor subfamily B member 4B (303 aa).

The signal sequence occupies residues 1–23; it reads MIAMLTVLLYLALILEPRTAVQA. At 24–238 the chain is on the extracellular side; the sequence is GHLPKPIIWA…TEDGLETYQK (215 aa). Ig-like C2-type domains are found at residues 42 to 123 and 124 to 212; these read YTSV…AYEN and PSLS…KPSN. A disulfide bond links Cys-49 and Cys-98. Asn-79, Asn-133, and Asn-191 each carry an N-linked (GlcNAc...) asparagine glycan. Cys-144 and Cys-196 are oxidised to a cystine. A helical transmembrane segment spans residues 239–260; it reads ILIGVLVSFLLLFFLLLFLILI. Residues 261–303 lie on the Cytoplasmic side of the membrane; that stretch reads GYQCRHKNKANASVKNTQSEDNAELNSWNPQNEDPPRELCTPR. Positions 275 to 292 are enriched in polar residues; the sequence is KNTQSEDNAELNSWNPQN. Positions 275–303 are disordered; sequence KNTQSEDNAELNSWNPQNEDPPRELCTPR.

In terms of assembly, monomer and homodimer. As to expression, expressed on mast cells (at protein level). Also expressed at much lower levels on natural killer cells (at protein level).

It localises to the cell membrane. In terms of biological role, plays a role in mast cell activation. In Mus musculus (Mouse), this protein is Leukocyte immunoglobulin-like receptor subfamily B member 4B.